Reading from the N-terminus, the 319-residue chain is FAD-dependent oxidoreductase FVFD30 (319 aa).

FAD contacts are provided by Arg-6, Asp-18, and Lys-25. 2 residues coordinate NAD(+): Lys-129 and Gly-188. NADP(+) contacts are provided by Lys-129 and Gly-188. Positions 228 and 265 each coordinate FAD. A 6-hydroxy-FAD-binding site is contributed by Asp-228. Tyr-265 is an NAD(+) binding site. An NADP(+)-binding site is contributed by Tyr-265. The chain crosses the membrane as a helical span at residues 281–301 (GVGYFGVWWGIVIGGWLASLL).

Belongs to the FAD-dependent oxidoreductase family.

Its subcellular location is the membrane. Probable FAD-dependent oxidoreductase that plays a role in the regulation of fruiting body development. The chain is FAD-dependent oxidoreductase FVFD30 from Flammulina velutipes (Agaricus velutipes).